A 143-amino-acid polypeptide reads, in one-letter code: Large ribosomal subunit protein uL11 (143 aa).

Belongs to the universal ribosomal protein uL11 family. Part of the ribosomal stalk of the 50S ribosomal subunit. Interacts with L10 and the large rRNA to form the base of the stalk. L10 forms an elongated spine to which L12 dimers bind in a sequential fashion forming a multimeric L10(L12)X complex. Post-translationally, one or more lysine residues are methylated.

In terms of biological role, forms part of the ribosomal stalk which helps the ribosome interact with GTP-bound translation factors. The chain is Large ribosomal subunit protein uL11 from Janthinobacterium sp. (strain Marseille) (Minibacterium massiliensis).